Reading from the N-terminus, the 95-residue chain is Aspartyl/glutamyl-tRNA(Asn/Gln) amidotransferase subunit C (95 aa).

The protein belongs to the GatC family. As to quaternary structure, heterotrimer of A, B and C subunits.

The enzyme catalyses L-glutamyl-tRNA(Gln) + L-glutamine + ATP + H2O = L-glutaminyl-tRNA(Gln) + L-glutamate + ADP + phosphate + H(+). It catalyses the reaction L-aspartyl-tRNA(Asn) + L-glutamine + ATP + H2O = L-asparaginyl-tRNA(Asn) + L-glutamate + ADP + phosphate + 2 H(+). Its function is as follows. Allows the formation of correctly charged Asn-tRNA(Asn) or Gln-tRNA(Gln) through the transamidation of misacylated Asp-tRNA(Asn) or Glu-tRNA(Gln) in organisms which lack either or both of asparaginyl-tRNA or glutaminyl-tRNA synthetases. The reaction takes place in the presence of glutamine and ATP through an activated phospho-Asp-tRNA(Asn) or phospho-Glu-tRNA(Gln). This Beijerinckia indica subsp. indica (strain ATCC 9039 / DSM 1715 / NCIMB 8712) protein is Aspartyl/glutamyl-tRNA(Asn/Gln) amidotransferase subunit C.